Here is a 306-residue protein sequence, read N- to C-terminus: Dihydroorotate dehydrogenase B (NAD(+)), catalytic subunit (306 aa).

Residues serine 23 and 47-48 (KS) contribute to the FMN site. Substrate-binding positions include lysine 47, 71 to 75 (NAMGL), and asparagine 130. Residue asparagine 130 coordinates FMN. Cysteine 133 serves as the catalytic Nucleophile. Residues lysine 168 and isoleucine 194 each coordinate FMN. 195 to 196 (NT) contributes to the substrate binding site. FMN-binding positions include glycine 220, 246–247 (GG), and 268–269 (GS).

The protein belongs to the dihydroorotate dehydrogenase family. Type 1 subfamily. As to quaternary structure, heterotetramer of 2 PyrK and 2 PyrD type B subunits. It depends on FMN as a cofactor.

The protein localises to the cytoplasm. The catalysed reaction is (S)-dihydroorotate + NAD(+) = orotate + NADH + H(+). Its pathway is pyrimidine metabolism; UMP biosynthesis via de novo pathway; orotate from (S)-dihydroorotate (NAD(+) route): step 1/1. Catalyzes the conversion of dihydroorotate to orotate with NAD(+) as electron acceptor. In Methanocaldococcus jannaschii (strain ATCC 43067 / DSM 2661 / JAL-1 / JCM 10045 / NBRC 100440) (Methanococcus jannaschii), this protein is Dihydroorotate dehydrogenase B (NAD(+)), catalytic subunit (pyrD).